Reading from the N-terminus, the 662-residue chain is ATP-dependent RNA helicase DDX3X (662 aa).

An N-acetylserine modification is found at S2. A required for TBK1 and IKBKE-dependent IFNB1 activation region spans residues 2 to 139 (SHVAVENALG…KSDEDDWSKP (138 aa)). A Nuclear export signal motif is present at residues 12-21 (LDQQFAGLDL). A disordered region spans residues 19 to 144 (LDLNSSDNQS…DWSKPLPPSE (126 aa)). A compositionally biased stretch (polar residues) spans 21-34 (LNSSDNQSGGSTAS). Residues 38–44 (YIPPHLR) are interaction with EIF4E. Basic and acidic residues predominate over residues 44–68 (RNREATKGFYDKDSSGWSSSKDKDA). K55 is modified (N6-acetyllysine). Phosphoserine is present on residues S82 and S90. The segment covering 94-130 (GRFDDRGRGDYDGIGGRGDRSGFGKFERGGNSRWCDK) has biased composition (basic and acidic residues). An interaction with IKBKE region spans residues 100 to 110 (GRGDYDGIGGR). Residues 100–662 (GRGDYDGIGG…NSQGVDWWGN (563 aa)) are interaction with GSK3B. Position 101 is an omega-N-methylarginine (R101). A Phosphotyrosine modification is found at Y104. Omega-N-methylarginine is present on R110. K118 carries the N6-acetyllysine modification. The residue at position 131 (S131) is a Phosphoserine. The interval 139-172 (PLPPSERLEQELFSGGNTGINFEKYDDIPVEATG) is interaction with CHUK. A Q motif motif is present at residues 180 to 208 (ESFSDVEMGEIIMGNIELTRYTRPTPVQK). S183 is modified (phosphoserine). 200 to 207 (YTRPTPVQ) is a binding site for ATP. The region spanning 211–403 (IPIIKEKRDL…RDFLDEYIFL (193 aa)) is the Helicase ATP-binding domain. K215 is covalently cross-linked (Glycyl lysine isopeptide (Lys-Gly) (interchain with G-Cter in SUMO2)). ATP is bound at residue 224-231 (AQTGSGKT). The interval 250-259 (ALRAMKENGR) is involved in stimulation of ATPase activity by DNA and RNA, nucleic acid binding and unwinding. Positions 347 to 350 (DEAD) match the DEAD box motif. The 162-residue stretch at 414–575 (NITQKVVWVE…EVPSWLENMA (162 aa)) folds into the Helicase C-terminal domain. A Phosphoserine modification is found at S456. Positions 536-661 (GNLGLATSFF…YNSQGVDWWG (126 aa)) are interaction with NXF1. An Omega-N-methylarginine modification is found at R592. Phosphoserine is present on residues S594, S605, and S612. The disordered stretch occupies residues 601 to 633 (DYRQSSGASSSSFSSSRASSSRSGGGGHGGSRG). A compositionally biased stretch (low complexity) spans 604-622 (QSSGASSSSFSSSRASSSR). Omega-N-methylarginine occurs at positions 617 and 632. The span at 623 to 633 (SGGGGHGGSRG) shows a compositional bias: gly residues.

It belongs to the DEAD box helicase family. DDX3/DED1 subfamily. Homodimer; can bind RNA as a monomer and as a dimer/oligomer. Interacts with TDRD3. When phosphorylated, interacts with IRF3; the interaction facilitates the phosphorylation and activation of IRF3 by IKBKE. Directly interacts with XPO1/CRM1. The interaction with XPO1/CMR1 is dependent on the DDX3X nuclear export signal motif and XPO1 interaction with GTPase RAN in its active GTP-bound form. Weakly interacts with TBKBP1/SINTBAD. Directly interacts with TRAF3; this interaction stimulates TRAF3 'Lys-63' ubiquitination. Interacts with CSNK1E in a Wnt-dependent manner; this interaction greatly enhances CSNK1E affinity for ATP, stimulates its kinase activity and promotes CSNK1E-mediated DVL2 phosphorylation. In the presence of RNA, the interaction is decreased. Also interacts with CSNK1D and stimulates its kinase activity. Interacts with TRPV4; this interaction is decreased when the TRPV4 channel is activated, leading to DDX3X relocalization to the nucleus. Interacts with MAP3K14/NIK. Directly interacts with CHUK/IKKA after physiological activation of the TLR7 and TLR8 pathways; this interaction enhances CHUK autophosphorylation. May associate with EIF4F complex, composed of at least EIF4A, EIF4E and EIF4G1/EIF4G3. Directly interacts with EIF4E in an RNA-independent manner; this interaction enhances EIF4E cap-binding ability. Directly interacts with EIF4G1 in an RNA-independent manner. DDX3X competes with EIF4G1 for interaction with EIF4E. Interacts with EIF4A1 and EIF2S1 in an RNA-independent manner. Associates with the eukaryotic translation initiation factor 3 (eIF-3) complex, including with EIF3B and EIF3C subunits. Directly interacts with IKBKE/IKKE; this interaction stimulates IKBKE activating autophosphorylation and is induced upon viral infection. Interacts with TBK1. Interacts with SP1; this interaction potentiates SP1-induced CDKN1A/WAF1/CIP1 transcription. Interacts with GSK3A and GSK3B. Interacts with several death receptors, inclusing FAS, TNFRSF10A and TNFRSF10B. Recruited to TNFRSF10B in the absence of receptor stimulation. When TNFRSF10B is stimulated, further recruited to the receptor and cleaved by caspases. A large proteolytic fragment remains associated with TNFRSF10B. Interacts (via C-terminus) with NXF1/TAP; this interaction may be partly involved in DDX3X nuclear export and in NXF1 localization to stress granules. Identified in an mRNP complex, composed of at least DHX9, DDX3X, ELAVL1, HNRNPU, IGF2BP1/2, ILF3, PABPC1, PCBP2, PTBP2, STAU1, STAU2, SYNCRIP and YBX1. The interaction with IGF2BP1/2 is RNA-dependent. Directly interacts with PABPC1/PABP1 in an RNA-independent manner. This interaction increases in stressed cells and decreases during cell recovery. Interacts (via C-terminus) with MAVS/IPS-1; this interaction potentiates MAVS-mediated IFNB induction. Interacts with ERCC6/CBS. Interacts with DHX33 in an RNA-independent manner. Interacts with DDX5 in the cytoplasm; this interaction may be more efficient when both proteins are unphosphorylated. Interacts with RIGI. Interacts with IFIH1/MDA5. Interacts with NCAPH; this interaction may be important for the NCAPH localization at condensing chromosomes during mitosis. Interacts with NLRP3 (via NACHT domain) under inflammasome-activating conditions. Interacts with CAPRIN1. Interacts with HNF4A and NR0B2/SHP in an RNA-independent manner; this interaction disrupts the interaction between HNF4 and NR0B2 that forms inactive heterodimers and enhances the formation of active HNF4 homodimers. Interacts with CREBBP/CBP. Interacts with EP300/p300. Interacts with gamma-tubulin. Interacts with phosphorylated TP53. Directly interacts with RELA/p65; this interaction may trap RELA in the cytoplasm, impairing nuclear relocalization upon TNF activating signals. In terms of processing, phosphorylated by TBK1; the phosphorylation is required for the synergistic induction of IFNB mediated by TBK1 and DDX3X. Phosphorylated by IKBKE. Also phosphorylated by CSNK1E; this phosphorylation may inhibit RNA-stimulated ATPase activity. Post-translationally, upon stimulation of death receptors, including TNFRSF10B, recruited to receptors and cleaved by caspases. Proteolytic fragments remain associated with the receptors. This cleavage presumably inactivates DDX3X anti-apoptotic function. Ubiquitinated by RNF39 via 'Lys-48'-linked ubiquitination; leading to proteasomal degradation. In terms of tissue distribution, expressed in ovary, including in germinal vesicle immature and metaphase II (MII) stage oocytes (at protein level). In the brain, expressed in the granule cells of the cerebellum and dentate gyrus, the pyramidal cells of the hippocampus, the ependymal cells lining the ventricles, choroid plexi and olfactory bulb. Also accumulates in the thalamic nuclei, the dorsal region of the colliculi and the pontine nucleus.

The protein resides in the cell membrane. The protein localises to the nucleus. It is found in the cytoplasm. It localises to the stress granule. Its subcellular location is the inflammasome. The protein resides in the cell projection. The protein localises to the lamellipodium. The catalysed reaction is ATP + H2O = ADP + phosphate + H(+). Functionally, multifunctional ATP-dependent RNA helicase. The ATPase activity can be stimulated by various ribo-and deoxynucleic acids indicative for a relaxed substrate specificity. In vitro can unwind partially double-stranded DNA with a preference for 5'-single-stranded DNA overhangs. Binds RNA G-quadruplex (rG4s) structures, including those located in the 5'-UTR of NRAS mRNA. Involved in many cellular processes, which do not necessarily require its ATPase/helicase catalytic activities. Involved in transcription regulation. Positively regulates CDKN1A/WAF1/CIP1 transcription in an SP1-dependent manner, hence inhibits cell growth. This function requires its ATPase, but not helicase activity. CDKN1A up-regulation may be cell-type specific. Binds CDH1/E-cadherin promoter and represses its transcription. Potentiates HNF4A-mediated MTTP transcriptional activation; this function requires ATPase, but not helicase activity. Facilitates HNF4A acetylation, possibly catalyzed by CREBBP/EP300, thereby increasing the DNA-binding affinity of HNF4 to its response element. In addition, disrupts the interaction between HNF4 and SHP that forms inactive heterodimers and enhances the formation of active HNF4 homodimers. By promoting HNF4A-induced MTTP expression, may play a role in lipid homeostasis. May positively regulate TP53 transcription. Associates with mRNPs, predominantly with spliced mRNAs carrying an exon junction complex (EJC). Involved in the regulation of translation initiation. Not involved in the general process of translation, but promotes efficient translation of selected complex mRNAs, containing highly structured 5'-untranslated regions (UTR). This function depends on helicase activity. Might facilitate translation by resolving secondary structures of 5'-UTRs during ribosome scanning. Alternatively, may act prior to 43S ribosomal scanning and promote 43S pre-initiation complex entry to mRNAs exhibiting specific RNA motifs, by performing local remodeling of transcript structures located close to the cap moiety. Independently of its ATPase activity, promotes the assembly of functional 80S ribosomes and disassembles from ribosomes prior to the translation elongation process. Positively regulates the translation of cyclin E1/CCNE1 mRNA and consequently promotes G1/S-phase transition during the cell cycle. May activate TP53 translation. Required for endoplasmic reticulum stress-induced ATF4 mRNA translation. Independently of its ATPase/helicase activity, enhances IRES-mediated translation; this activity requires interaction with EIF4E. Independently of its ATPase/helicase activity, has also been shown specifically repress cap-dependent translation, possibly by acting on translation initiation factor EIF4E. Involved in innate immunity, acting as a viral RNA sensor. Binds viral RNAs and promotes the production of type I interferon (IFN-alpha and IFN-beta). Potentiate MAVS/RIGI-mediated induction of IFNB in early stages of infection. Enhances IFNB1 expression via IRF3/IRF7 pathway and participates in NFKB activation in the presence of MAVS and TBK1. Involved in TBK1 and IKBKE-dependent IRF3 activation leading to IFNB induction, acts as a scaffolding adapter that links IKBKE and IRF3 and coordinates their activation. Involved in the TLR7/TLR8 signaling pathway leading to type I interferon induction, including IFNA4 production. In this context, acts as an upstream regulator of IRF7 activation by MAP3K14/NIK and CHUK/IKKA. Stimulates CHUK autophosphorylation and activation following physiological activation of the TLR7 and TLR8 pathways, leading to MAP3K14/CHUK-mediated activatory phosphorylation of IRF7. Also stimulates MAP3K14/CHUK-dependent NF-kappa-B signaling. Negatively regulates TNF-induced IL6 and IL8 expression, via the NF-kappa-B pathway. May act by interacting with RELA/p65 and trapping it in the cytoplasm. May also bind IFNB promoter; the function is independent of IRF3. Involved in both stress and inflammatory responses. Independently of its ATPase/helicase activity, required for efficient stress granule assembly through its interaction with EIF4E, hence promotes survival in stressed cells. Independently of its helicase activity, regulates NLRP3 inflammasome assembly through interaction with NLRP3 and hence promotes cell death by pyroptosis during inflammation. This function is independent of helicase activity. Therefore DDX3X availability may be used to interpret stress signals and choose between pro-survival stress granules and pyroptotic NLRP3 inflammasomes and serve as a live-or-die checkpoint in stressed cells. In association with GSK3A/B, negatively regulates extrinsic apoptotic signaling pathway via death domain receptors, including TNFRSF10B, slowing down the rate of CASP3 activation following death receptor stimulation. Cleavage by caspases may inactivate DDX3X and relieve the inhibition. Independently of its ATPase/helicase activity, allosteric activator of CSNK1E. Stimulates CSNK1E-mediated phosphorylation of DVL2, thereby involved in the positive regulation of Wnt/beta-catenin signaling pathway. Also activates CSNK1A1 and CSNK1D in vitro, but it is uncertain if these targets are physiologically relevant. ATPase and casein kinase-activating functions are mutually exclusive. May be involved in mitotic chromosome segregation. The polypeptide is ATP-dependent RNA helicase DDX3X (Ddx3x) (Mus musculus (Mouse)).